Reading from the N-terminus, the 1122-residue chain is Receptor-type guanylate cyclase gcy-5 (1122 aa).

A signal peptide spans 1–19; it reads MRLLYFSMVLLWVLGASEC. Over 20-486 the chain is Extracellular; sequence QVIPSSRRTL…CPVQFWDQYG (467 aa). Residues Asn-252, Asn-299, Asn-344, Asn-350, Asn-378, Asn-434, and Asn-439 are each glycosylated (N-linked (GlcNAc...) asparagine). Residues 487 to 507 traverse the membrane as a helical segment; it reads VLIFVASIVLIFLICIMLMCF. The Cytoplasmic segment spans residues 508 to 1122; that stretch reads GFMIRGRRAE…KSKMDTLKVV (615 aa). The tract at residues 536-562 is disordered; it reads QKEKRKPNSRRSLQSGPSTITGESKMT. The region spanning 542 to 830 is the Protein kinase domain; sequence PNSRRSLQSG…NTNLMDHVFN (289 aa). Residues 545 to 559 are compositionally biased toward polar residues; sequence RRSLQSGPSTITGES. The 131-residue stretch at 888–1018 folds into the Guanylate cyclase domain; the sequence is TVLFSDVVKF…DTVNTASRME (131 aa). Positions 1071 to 1122 are disordered; that stretch reads SDTKSLSTRTTPPITDENWPPQMKEDLKKRAVTPYPERQRSGKSKMDTLKVV. Positions 1074–1083 are enriched in polar residues; it reads KSLSTRTTPP. The segment covering 1107–1122 has biased composition (basic and acidic residues); it reads ERQRSGKSKMDTLKVV.

The protein belongs to the adenylyl cyclase class-4/guanylyl cyclase family. As to expression, expressed in both ASEL and ASER neurons during early embryonic stages and becomes specifically expressed in ASER neuron in early larval stage.

The protein resides in the cell membrane. It carries out the reaction GTP = 3',5'-cyclic GMP + diphosphate. Its function is as follows. Guanylate cyclase involved in the production of the second messenger cGMP. Unlike other guanylate cyclases expressed in ASE neurons, may not play a role in chemotaxis responses to salt ions mediated by ASE sensory neurons. The polypeptide is Receptor-type guanylate cyclase gcy-5 (Caenorhabditis elegans).